The sequence spans 714 residues: Fatty acid oxidation complex subunit alpha (714 aa).

The segment at 1 to 190 (MEMASVFTLN…KLGLVDDVVP (190 aa)) is enoyl-CoA hydratase. The segment at 306–714 (APLNSVGILG…FWKTTATDLQ (409 aa)) is 3-hydroxyacyl-CoA dehydrogenase.

It in the N-terminal section; belongs to the enoyl-CoA hydratase/isomerase family. The protein in the central section; belongs to the 3-hydroxyacyl-CoA dehydrogenase family. As to quaternary structure, heterotetramer of two alpha chains (FadJ) and two beta chains (FadI).

It is found in the cytoplasm. It catalyses the reaction a (3S)-3-hydroxyacyl-CoA = a (2E)-enoyl-CoA + H2O. The enzyme catalyses a 4-saturated-(3S)-3-hydroxyacyl-CoA = a (3E)-enoyl-CoA + H2O. It carries out the reaction a (3S)-3-hydroxyacyl-CoA + NAD(+) = a 3-oxoacyl-CoA + NADH + H(+). The catalysed reaction is (3S)-3-hydroxybutanoyl-CoA = (3R)-3-hydroxybutanoyl-CoA. It functions in the pathway lipid metabolism; fatty acid beta-oxidation. Catalyzes the formation of a hydroxyacyl-CoA by addition of water on enoyl-CoA. Also exhibits 3-hydroxyacyl-CoA epimerase and 3-hydroxyacyl-CoA dehydrogenase activities. The chain is Fatty acid oxidation complex subunit alpha from Escherichia coli (strain SE11).